We begin with the raw amino-acid sequence, 188 residues long: GTP cyclohydrolase 1 (188 aa).

Zn(2+)-binding residues include C78, H81, and C150.

This sequence belongs to the GTP cyclohydrolase I family. In terms of assembly, homomer.

It catalyses the reaction GTP + H2O = 7,8-dihydroneopterin 3'-triphosphate + formate + H(+). It participates in cofactor biosynthesis; 7,8-dihydroneopterin triphosphate biosynthesis; 7,8-dihydroneopterin triphosphate from GTP: step 1/1. In Geobacillus sp. (strain WCH70), this protein is GTP cyclohydrolase 1.